Reading from the N-terminus, the 778-residue chain is Kin of IRRE-like protein 3 (778 aa).

Residues 1-21 (MRPFQLDLLFLCFFLFSQELG) form the signal peptide. The Extracellular portion of the chain corresponds to 22–535 (LQKRGCCLVL…GLEAESVPMA (514 aa)). 5 consecutive Ig-like C2-type domains span residues 48-142 (YSFS…ARLT), 147-243 (PDDP…TSVT), 249-330 (PPLV…RTVD), 335-415 (PRMT…VTLT), and 419-515 (PPII…IRLK). Cys-69 and Cys-127 are oxidised to a cystine. N-linked (GlcNAc...) asparagine glycosylation occurs at Asn-167. Cys-170 and Cys-227 form a disulfide bridge. A glycan (N-linked (GlcNAc...) asparagine) is linked at Asn-253. Cys-271 and Cys-314 are joined by a disulfide. A glycan (N-linked (GlcNAc...) asparagine) is linked at Asn-324. Intrachain disulfides connect Cys-356–Cys-398 and Cys-440–Cys-499. Residue Asn-498 is glycosylated (N-linked (GlcNAc...) asparagine). A helical transmembrane segment spans residues 536–556 (VIIGVAVGAGVAFLVLMATIV). Residues 557 to 778 (AFCCARSQRN…PLQRRMQTHV (222 aa)) lie on the Cytoplasmic side of the membrane. Residues 727 to 736 (CDSSVSSSGK) show a composition bias toward polar residues. Residues 727–778 (CDSSVSSSGKQDGYVQFDKASKASASSSHHSQSSSQNSDPSRPLQRRMQTHV) are disordered. Positions 748 to 762 (KASASSSHHSQSSSQ) are enriched in low complexity.

The protein belongs to the immunoglobulin superfamily. In terms of assembly, homodimer; mediates homophilic interactions to promote cell adhesion. Interacts with NPHS1; forms heterodimers with NPHS1. Interacts with NPHS2/podocin (via the C-terminus). Interacts with CASK. Interacts (via extracellular region) with MAP1B. Interacts (via extracellular region) with MYO16. Interacts (via intracellular region) with ATP1B1. Interacts (via intracellular region) with SHMT2. Interacts (via intracellular region) with UFC1. In terms of processing, undergoes proteolysis by a metalloprotease and gives rise to a soluble form. As to expression, expressed mainly in adult brain, bone marrow and stromal cells. Expressed in diverse regions of the brain, including the cortex, hippocampus, striatum, olfactory bulb and cerebellum. In brain, expressed in pontine nucleus neurons (at protein level). In hippocampus, produced in both the dentate granule neurons and the GABAergic neurons, but not the CA3 neurons. Expressed in subpopulations of vomeronasal sensory neurons. Expressed in a subset of neurons in dorsal root ganglia.

It is found in the cell membrane. The protein resides in the cell projection. Its subcellular location is the axon. The protein localises to the dendrite. It localises to the secreted. Its function is as follows. Synaptic adhesion molecule required for the formation of target-specific synapses. Required for formation of target-specific synapses at hippocampal mossy fiber synapses. Required for formation of mossy fiber filopodia, the synaptic structures connecting dentate granule and GABA neurons. Probably acts as a homophilic adhesion molecule that promotes trans-cellular interactions and stabilize mossy fiber filipodia contact and subsequent synapse formation. Required for the coalescence of vomeronasal sensory neuron axons. May be involved in the hematopoietic supportive capacity of stroma cells; the secreted extracellular domain is directly responsible for supporting hematopoietic stem cells. This Mus musculus (Mouse) protein is Kin of IRRE-like protein 3 (Kirrel3).